A 147-amino-acid chain; its full sequence is Large ribosomal subunit protein uL15 (147 aa).

A compositionally biased stretch (basic and acidic residues) spans 1-14; that stretch reads MKLHELRPAEGAVR. Positions 1-54 are disordered; sequence MKLHELRPAEGAVRDRKRKGRGTASGLGKTAGRGSNGQKARSGGGVRPGFEGGQ. 2 stretches are compositionally biased toward gly residues: residues 23 to 35 and 42 to 52; these read TASGLGKTAGRGS and SGGGVRPGFEG.

It belongs to the universal ribosomal protein uL15 family. In terms of assembly, part of the 50S ribosomal subunit.

Binds to the 23S rRNA. The polypeptide is Large ribosomal subunit protein uL15 (Alkaliphilus oremlandii (strain OhILAs) (Clostridium oremlandii (strain OhILAs))).